A 1684-amino-acid polypeptide reads, in one-letter code: GRIP and coiled-coil domain-containing protein 2 (1684 aa).

Met-1 carries the post-translational modification N-acetylmethionine. The tract at residues 1 to 22 (MEDLVQDGVASPATPGTGKSKL) is disordered. Ser-11 carries the phosphoserine modification. A Phosphothreonine modification is found at Thr-14. Residues 110-1618 (VTKMGDAHKE…REKSAANLEY (1509 aa)) are a coiled coil. Phosphoserine is present on residues Ser-236, Ser-1483, and Ser-1487. Positions 1475-1502 (LKNEPTTRSPVSSQQSLKNLRERRNTDL) are disordered. The span at 1477-1492 (NEPTTRSPVSSQQSLK) shows a compositional bias: polar residues. Residues 1574 to 1613 (HLNGLLRETEATNAILMEQIKLLKSEIRRLERNQEREKSA) form a mediates interaction with RAB6A region. Positions 1574–1684 (HLNGLLRETE…SYLHSWSGLR (111 aa)) are mediates interaction with RAB9A. Positions 1609–1659 (REKSAANLEYLKNVLLQFIFLKPGSERERLLPVINTMLQLSPEEKGKLAAV) constitute a GRIP domain.

In terms of assembly, homodimer. Interacts (via GRIP domain) with RAB6A (preferentially in its GTP-bound form). May interact (RAB6A-dependent) with ARL1; according to PubMed:19703403, RAB6A and ARL1 are not involved in GCC2 Golgi localization as proposed by PubMed:18243103. Interacts (probably via GRIP domain) with RAB9A (preferentially in its GTP-bound form). Interacts with CLASP1 and CLASP2; recruits both proteins to membranes of the TGN. Interacts with STX16. Ubiquitous.

It is found in the cytoplasm. The protein resides in the golgi apparatus. The protein localises to the trans-Golgi network membrane. Its function is as follows. Golgin which probably tethers transport vesicles to the trans-Golgi network (TGN) and regulates vesicular transport between the endosomes and the Golgi. As a RAB9A effector it is involved in recycling of the mannose 6-phosphate receptor from the late endosomes to the TGN. May also play a role in transport between the recycling endosomes and the Golgi. Required for maintenance of the Golgi structure, it is involved in the biogenesis of noncentrosomal, Golgi-associated microtubules through recruitment of CLASP1 and CLASP2. This chain is GRIP and coiled-coil domain-containing protein 2 (GCC2), found in Homo sapiens (Human).